The primary structure comprises 291 residues: Small ribosomal subunit biogenesis GTPase RsgA (291 aa).

One can recognise a CP-type G domain in the interval 63 to 221 (NNELKRPPVS…IADTPGFSAL (159 aa)). Residues 112–115 (TKHD) and 164–172 (GQSGVGKST) contribute to the GTP site. Cys-245, Cys-250, His-252, and Cys-258 together coordinate Zn(2+).

This sequence belongs to the TRAFAC class YlqF/YawG GTPase family. RsgA subfamily. In terms of assembly, monomer. Associates with 30S ribosomal subunit, binds 16S rRNA. It depends on Zn(2+) as a cofactor.

It is found in the cytoplasm. One of several proteins that assist in the late maturation steps of the functional core of the 30S ribosomal subunit. Helps release RbfA from mature subunits. May play a role in the assembly of ribosomal proteins into the subunit. Circularly permuted GTPase that catalyzes slow GTP hydrolysis, GTPase activity is stimulated by the 30S ribosomal subunit. This is Small ribosomal subunit biogenesis GTPase RsgA from Staphylococcus epidermidis (strain ATCC 12228 / FDA PCI 1200).